A 221-amino-acid chain; its full sequence is Casparian strip membrane protein 2 (221 aa).

A disordered region spans residues 1–21 (MEKSEATTIEIGETSRESKGK). Over 1-41 (MEKSEATTIEIGETSRESKGKTPLLAEVEQTARTAGSYRRG) the chain is Cytoplasmic. Residues 42-62 (VAIFDLILRVSAATSALAATI) form a helical membrane-spanning segment. Topologically, residues 63-89 (TMGTTEQTLPFFTQFFQFQASYDDLPA) are extracellular. The helical transmembrane segment at 90–110 (FTFFVIALSIVTGYLVLSVPF) threads the bilayer. The Cytoplasmic segment spans residues 111-131 (SVVCIAQPLAAVPRLLLIVCD). A helical transmembrane segment spans residues 132–152 (TLTVTLATAAASSSAAIVYLA). The Extracellular portion of the chain corresponds to 153-221 (HNGNADANWL…HYWDRRWCEI (69 aa)).

This sequence belongs to the Casparian strip membrane proteins (CASP) family. In terms of assembly, homodimer and heterodimers.

It is found in the cell membrane. Regulates membrane-cell wall junctions and localized cell wall deposition. Required for establishment of the Casparian strip membrane domain (CSD) and the subsequent formation of Casparian strips, a cell wall modification of the root endodermis that determines an apoplastic barrier between the intraorganismal apoplasm and the extraorganismal apoplasm and prevents lateral diffusion. The polypeptide is Casparian strip membrane protein 2 (Erythranthe guttata (Yellow monkey flower)).